Reading from the N-terminus, the 700-residue chain is Long chain acyl-CoA synthetase 7, peroxisomal (700 aa).

The disordered stretch occupies residues 1–29; it reads MEFASPEQRRLETIRSHIDTSPTNDQSSS. Residues 7–18 show a composition bias toward basic and acidic residues; the sequence is EQRRLETIRSHI. The short motif at 10–18 is the Microbody targeting signal element; it reads RLETIRSHI. Polar residues predominate over residues 19–29; the sequence is DTSPTNDQSSS. 266–277 contacts ATP; that stretch reads ICYTSGTTGTPK. The tract at residues 526–550 is fatty acid-binding; it reads DGWLHTGDIGLWLPGGRLKIIDRKK. A Microbody targeting signal motif is present at residues 698 to 700; that stretch reads SKL.

It belongs to the ATP-dependent AMP-binding enzyme family. Interacts with PEX5. Requires Mg(2+) as cofactor. In terms of tissue distribution, expressed in roots, stems, leaves flowers and germinating seedling. Preferentially expressed in seeds.

It is found in the peroxisome. It carries out the reaction a long-chain fatty acid + ATP + CoA = a long-chain fatty acyl-CoA + AMP + diphosphate. The catalysed reaction is decanoate + ATP + CoA = decanoyl-CoA + AMP + diphosphate. The enzyme catalyses dodecanoate + ATP + CoA = dodecanoyl-CoA + AMP + diphosphate. It catalyses the reaction tetradecanoate + ATP + CoA = tetradecanoyl-CoA + AMP + diphosphate. It carries out the reaction hexadecanoate + ATP + CoA = hexadecanoyl-CoA + AMP + diphosphate. The catalysed reaction is (9Z)-octadecenoate + ATP + CoA = (9Z)-octadecenoyl-CoA + AMP + diphosphate. The enzyme catalyses (9Z,12Z)-octadecadienoate + ATP + CoA = (9Z,12Z)-octadecadienoyl-CoA + AMP + diphosphate. It catalyses the reaction (9Z,12Z,15Z)-octadecatrienoate + ATP + CoA = (9Z,12Z,15Z)-octadecatrienoyl-CoA + AMP + diphosphate. It functions in the pathway lipid metabolism; fatty acid metabolism. Activation of long-chain fatty acids for both synthesis of cellular lipids, and degradation via beta-oxidation. Preferentially uses palmitate, palmitoleate, oleate, linoleate and eicosenoate as substrates. Can use myristate and linolenate as substrates. Functions redundantly with LACS6 in lipid mobilization for beta-oxidation during seed germination, which is essential for postgerminative growth and seedling establishment. This chain is Long chain acyl-CoA synthetase 7, peroxisomal, found in Arabidopsis thaliana (Mouse-ear cress).